Here is a 264-residue protein sequence, read N- to C-terminus: 3-methyl-2-oxobutanoate hydroxymethyltransferase (264 aa).

Positions 45 and 84 each coordinate Mg(2+). 3-methyl-2-oxobutanoate is bound by residues 45–46 (DS), aspartate 84, and lysine 112. Residue glutamate 114 participates in Mg(2+) binding. Glutamate 181 functions as the Proton acceptor in the catalytic mechanism.

It belongs to the PanB family. In terms of assembly, homodecamer; pentamer of dimers. Requires Mg(2+) as cofactor.

Its subcellular location is the cytoplasm. It catalyses the reaction 3-methyl-2-oxobutanoate + (6R)-5,10-methylene-5,6,7,8-tetrahydrofolate + H2O = 2-dehydropantoate + (6S)-5,6,7,8-tetrahydrofolate. It functions in the pathway cofactor biosynthesis; (R)-pantothenate biosynthesis; (R)-pantoate from 3-methyl-2-oxobutanoate: step 1/2. Its function is as follows. Catalyzes the reversible reaction in which hydroxymethyl group from 5,10-methylenetetrahydrofolate is transferred onto alpha-ketoisovalerate to form ketopantoate. The sequence is that of 3-methyl-2-oxobutanoate hydroxymethyltransferase from Escherichia coli O157:H7.